The primary structure comprises 166 residues: Stress response protein NhaX (166 aa).

This sequence belongs to the universal stress protein A family.

The chain is Stress response protein NhaX (nhaX) from Bacillus subtilis (strain 168).